The sequence spans 305 residues: Homoserine O-acetyltransferase (305 aa).

Catalysis depends on Cys-142, which acts as the Acyl-thioester intermediate. Residues Lys-163 and Ser-192 each coordinate substrate. The Proton acceptor role is filled by His-233. Glu-235 is a catalytic residue. Substrate is bound at residue Arg-247.

This sequence belongs to the MetA family.

It localises to the cytoplasm. The enzyme catalyses L-homoserine + acetyl-CoA = O-acetyl-L-homoserine + CoA. It participates in amino-acid biosynthesis; L-methionine biosynthesis via de novo pathway; O-acetyl-L-homoserine from L-homoserine: step 1/1. Transfers an acetyl group from acetyl-CoA to L-homoserine, forming acetyl-L-homoserine. In Methanomassiliicoccus intestinalis (strain Issoire-Mx1), this protein is Homoserine O-acetyltransferase.